Here is a 305-residue protein sequence, read N- to C-terminus: UDP-3-O-acyl-N-acetylglucosamine deacetylase (305 aa).

3 residues coordinate Zn(2+): histidine 79, histidine 238, and aspartate 242. Histidine 265 (proton donor) is an active-site residue.

The protein belongs to the LpxC family. Requires Zn(2+) as cofactor.

The catalysed reaction is a UDP-3-O-[(3R)-3-hydroxyacyl]-N-acetyl-alpha-D-glucosamine + H2O = a UDP-3-O-[(3R)-3-hydroxyacyl]-alpha-D-glucosamine + acetate. Its pathway is glycolipid biosynthesis; lipid IV(A) biosynthesis; lipid IV(A) from (3R)-3-hydroxytetradecanoyl-[acyl-carrier-protein] and UDP-N-acetyl-alpha-D-glucosamine: step 2/6. Functionally, catalyzes the hydrolysis of UDP-3-O-myristoyl-N-acetylglucosamine to form UDP-3-O-myristoylglucosamine and acetate, the committed step in lipid A biosynthesis. This is UDP-3-O-acyl-N-acetylglucosamine deacetylase from Escherichia coli O45:K1 (strain S88 / ExPEC).